A 190-amino-acid chain; its full sequence is NADH-quinone oxidoreductase subunit C (190 aa).

Belongs to the complex I 30 kDa subunit family. NDH-1 is composed of 14 different subunits. Subunits NuoB, C, D, E, F, and G constitute the peripheral sector of the complex.

The protein localises to the cell membrane. It carries out the reaction a quinone + NADH + 5 H(+)(in) = a quinol + NAD(+) + 4 H(+)(out). Functionally, NDH-1 shuttles electrons from NADH, via FMN and iron-sulfur (Fe-S) centers, to quinones in the respiratory chain. The immediate electron acceptor for the enzyme in this species is believed to be ubiquinone. Couples the redox reaction to proton translocation (for every two electrons transferred, four hydrogen ions are translocated across the cytoplasmic membrane), and thus conserves the redox energy in a proton gradient. The polypeptide is NADH-quinone oxidoreductase subunit C (Wolbachia sp. subsp. Brugia malayi (strain TRS)).